A 727-amino-acid polypeptide reads, in one-letter code: Cyclin-T1 (727 aa).

Ser117 carries the phosphoserine modification. The short motif at 253 to 270 (KRIRNWRACQAAKKTKAD) is the Nuclear localization signal, and interaction with Tat-TAR RNA element. Residues 302 to 322 (MSTSSTTSTVPSLPTTEESSS) are compositionally biased toward low complexity. The segment at 302-326 (MSTSSTTSTVPSLPTTEESSSNLSG) is disordered. A Glycyl lysine isopeptide (Lys-Gly) (interchain with G-Cter in SUMO2) cross-link involves residue Lys343. A coiled-coil region spans residues 386–427 (SAKVSLKEYRAKHAEELAAQKRQLENMEANVKSQYAYAAQNL). Position 390 is a phosphoserine (Ser390). An N6-acetyllysine modification is found at Lys392. A Glycyl lysine isopeptide (Lys-Gly) (interchain with G-Cter in SUMO2) cross-link involves residue Lys417. 3 positions are modified to ADP-ribosylserine: Ser418, Ser476, and Ser477. A histidine-rich domain (HRD) region spans residues 482-552 (IKMRIKVHAA…RPGDPKHSSQ (71 aa)). Residue Lys483 forms a Glycyl lysine isopeptide (Lys-Gly) (interchain with G-Cter in SUMO2) linkage. Residues 486–508 (IKVHAAPDKHNSIDDSVTKSREH) are compositionally biased toward basic and acidic residues. Disordered regions lie at residues 486-591 (IKVH…DHPA) and 692-727 (LNPR…PLPK). Residue Lys487 is modified to N6-(ADP-ribosyl)lysine. His489 carries the post-translational modification ADP-ribosylhistidine. A phosphoserine mark is found at Ser497 and Ser501. Residues 509 to 532 (KEKHKTHPSNHHHHHNHHSHKHSH) show a composition bias toward basic residues. The residue at position 532 (His532) is an ADP-ribosylhistidine. Ser533, Ser551, and Ser554 each carry ADP-ribosylserine. His558 bears the ADP-ribosylhistidine mark. Positions 562-572 (SLSSSFSSSSS) are enriched in low complexity. Ser565 bears the ADP-ribosylserine mark. Ser566 is modified (phosphoserine). Over residues 711-727 (LPPLPSEPPPPLPPLPK) the composition is skewed to pro residues.

Belongs to the cyclin family. Cyclin C subfamily. In terms of assembly, cyclin-T1 is the predominant cyclin that associates with CDK9 to form a heterodimer called P-TEFb. P-TEFb forms a complex with AFF4/AF5Q31. Component of a complex which is at least composed of HTATSF1/Tat-SF1, P-TEFb complex, RNA pol II, SUPT5H, and NCL/nucleolin. Component of the 7SK snRNP complex at least composed of P-TEFb (composed of CDK9 and CCNT1/cyclin-T1), HEXIM1, HEXIM2, BCDIN3, SART3 proteins and 7SK and U6 snRNAs. Interacts (via central region) with ZMYND8 (via N-terminus); the interaction is direct and the association appears to occur between homodimeric ZMYND8 and the activated form of the P-TEFb complex. Interacts with BRD4, targets chromatin binding. Interacts with JMJD6. Interacts with MDFIC. Interacts with HSF1. Interacts with HTATSF1. Interacts with TBX21. Post-translationally, ADP-ribosylation on serine residues by PARP1 in response to DNA damage disrupts the phase separation activity of CCNT1, thereby preventing activation of CDK9.

The protein resides in the nucleus. Regulatory subunit of the cyclin-dependent kinase pair (CDK9/cyclin-T1) complex, also called positive transcription elongation factor B (P-TEFb), which facilitates the transition from abortive to productive elongation by phosphorylating the CTD (C-terminal domain) of the large subunit of RNA polymerase II (RNA Pol II). Required to activate the protein kinase activity of CDK9: acts by mediating formation of liquid-liquid phase separation (LLPS) that enhances binding of P-TEFb to the CTD of RNA Pol II. The protein is Cyclin-T1 (CCNT1) of Equus caballus (Horse).